Here is a 709-residue protein sequence, read N- to C-terminus: Copper amine oxidase vicK1 (709 aa).

The signal sequence occupies residues 1 to 20 (MKLFLLFTLTLVNIFSVSLQ). Catalysis depends on D365, which acts as the Proton acceptor. C383 and C408 are joined by a disulfide. Y448 functions as the Schiff-base intermediate with substrate; via topaquinone in the catalytic mechanism. Residue Y448 is modified to 2',4',5'-topaquinone. 2 residues coordinate Cu cation: H496 and H498. Ca(2+) is bound by residues D505, L506, D507, E548, F641, E645, D651, and L652. H662 is a binding site for Cu cation.

Belongs to the copper/topaquinone oxidase family. In terms of assembly, homodimer; disulfide-linked. The cofactor is Cu cation. It depends on Ca(2+) as a cofactor. L-topaquinone is required as a cofactor. Post-translationally, topaquinone (TPQ) is generated by copper-dependent autoxidation of a specific tyrosyl residue.

Its pathway is mycotoxin biosynthesis. Functionally, copper amine oxidase, part of the gene cluster that mediates the biosynthesis of the secondary metabolite victorin, the molecular basis for Victoria blight of oats. Within the pathway, vicK1 catalyzes the oxidative deamination of the N-terminal glycyl moiety of the hexapeptides in order to produce the active glyoxylate form victorins. The pathway starts with the processing of the precursor vicA1 by several endopeptidases including kexin proteases as well as the cluster-specific S28 family peptidases vicPa and vicPb to produce 7 identical copies of the hexapeptide Gly-Leu-Lys-Leu-Ala-Phe. After being excised from the precursor peptide, the core peptides are cyclized and modified post-translationally by enzymes encoded within the gene cluster. The ustYa family oxidase vicYb is required for the formation of the macrocycle in victorin and the copper amine oxidases (CAOs) vicK1 and vicK2 are responsible for converting victorin to the active form by oxidizing the N-terminal glycyl residue in the peptides to glyoxylate. Relaxed substrate specificity of enzymes in the victorin biosynthetic pathway results in a metabolic grid that produces a set of analogs including victorinines B, C, E or HV-toxin M. The sequence is that of Copper amine oxidase vicK1 from Bipolaris victoriae (strain FI3) (Victoria blight of oats agent).